A 292-amino-acid polypeptide reads, in one-letter code: NAD kinase (292 aa).

Asp73 functions as the Proton acceptor in the catalytic mechanism. NAD(+)-binding positions include 73 to 74 (DG), 147 to 148 (NE), His158, Arg175, Asp177, 188 to 193 (TAYSLS), and Gln247.

It belongs to the NAD kinase family. Requires a divalent metal cation as cofactor.

The protein resides in the cytoplasm. The enzyme catalyses NAD(+) + ATP = ADP + NADP(+) + H(+). In terms of biological role, involved in the regulation of the intracellular balance of NAD and NADP, and is a key enzyme in the biosynthesis of NADP. Catalyzes specifically the phosphorylation on 2'-hydroxyl of the adenosine moiety of NAD to yield NADP. This chain is NAD kinase, found in Salmonella dublin (strain CT_02021853).